The sequence spans 92 residues: Small ribosomal subunit protein uS15c (92 aa).

This sequence belongs to the universal ribosomal protein uS15 family. In terms of assembly, part of the 30S ribosomal subunit.

It is found in the plastid. Its subcellular location is the chloroplast. This is Small ribosomal subunit protein uS15c (rps15-A) from Lemna minor (Common duckweed).